We begin with the raw amino-acid sequence, 857 residues long: Dimethylglycine dehydrogenase, mitochondrial (857 aa).

A mitochondrion-targeting transit peptide spans 1–43 (MLRLGALRLRGLALRSSQGRPSSAGLREGQESPPSPPEWKDRA). The interval 15–39 (RSSQGRPSSAGLREGQESPPSPPEW) is disordered. FAD-binding positions include 52–53 (CV), 73–74 (EK), and 80–88 (GSTWHAAGL). H84 carries the post-translational modification Tele-8alpha-FAD histidine. An N6-acetyllysine modification is found at K107. At K141 the chain carries N6-acetyllysine; alternate. K141 carries the post-translational modification N6-succinyllysine; alternate. N6-acetyllysine is present on K161. FAD is bound at residue V212. K216 is subject to N6-acetyllysine. Residue W244 coordinates FAD. Residues K310 and K312 each carry the N6-succinyllysine modification. Residues K328 and K353 each carry the N6-acetyllysine modification. Position 390 to 395 (390 to 395 (FGYGII)) interacts with FAD. N6-acetyllysine; alternate occurs at positions 427, 469, and 516. N6-succinyllysine; alternate occurs at positions 427, 469, and 516. 573–575 (ELT) contributes to the (6S)-5,6,7,8-tetrahydrofolate binding site. K648 carries the post-translational modification N6-acetyllysine; alternate. At K648 the chain carries N6-succinyllysine; alternate. Residues Y669, 676–678 (ELY), and Y737 contribute to the (6S)-5,6,7,8-tetrahydrofolate site. K757 bears the N6-acetyllysine mark. N6-acetyllysine; alternate is present on K786. K786 carries the post-translational modification N6-succinyllysine; alternate. N6-succinyllysine is present on K788.

It belongs to the GcvT family. The cofactor is FAD.

The protein resides in the mitochondrion. The catalysed reaction is (6S)-5,6,7,8-tetrahydrofolyl-(gamma-L-Glu)(n) + N,N-dimethylglycine + oxidized [electron-transfer flavoprotein] + H(+) = (6R)-5,10-methylenetetrahydrofolyl-(gamma-L-Glu)(n) + sarcosine + reduced [electron-transfer flavoprotein]. Its pathway is amine and polyamine degradation; betaine degradation; sarcosine from betaine: step 2/2. In terms of biological role, catalyzes the demethylation of N,N-dimethylglycine to sarcosine. Also has activity with sarcosine in vitro. The protein is Dimethylglycine dehydrogenase, mitochondrial (Dmgdh) of Rattus norvegicus (Rat).